The sequence spans 416 residues: Tyrosine--tRNA ligase (416 aa).

Tyrosine 37 lines the L-tyrosine pocket. Positions 42–51 (PTADSLHVGN) match the 'HIGH' region motif. L-tyrosine-binding residues include tyrosine 176 and glutamine 180. The 'KMSKS' region signature appears at 236-240 (KMGKS). Lysine 239 is an ATP binding site. In terms of domain architecture, S4 RNA-binding spans 350–416 (LPAFRVFQEA…KKKHILLRPV (67 aa)).

It belongs to the class-I aminoacyl-tRNA synthetase family. TyrS type 1 subfamily. Homodimer.

The protein resides in the cytoplasm. The catalysed reaction is tRNA(Tyr) + L-tyrosine + ATP = L-tyrosyl-tRNA(Tyr) + AMP + diphosphate + H(+). Functionally, catalyzes the attachment of tyrosine to tRNA(Tyr) in a two-step reaction: tyrosine is first activated by ATP to form Tyr-AMP and then transferred to the acceptor end of tRNA(Tyr). This is Tyrosine--tRNA ligase from Gluconobacter oxydans (strain 621H) (Gluconobacter suboxydans).